We begin with the raw amino-acid sequence, 1021 residues long: Immunoglobulin superfamily member 2 (1021 aa).

The signal sequence occupies residues 1-20 (MAGISYVASFFLLLTKLSIG). The Extracellular portion of the chain corresponds to 21 to 954 (QREVTVQKGP…LPSRICSSAP (934 aa)). Ig-like C2-type domains are found at residues 22–139 (REVT…AKTN), 144–265 (PDTL…WMFI), 279–389 (PAVK…RTGS), 408–525 (PAAR…RDLS), 541–651 (LQVS…NSLY), 656–794 (PRAS…WHKL), and 808–925 (PTGS…KWIN). 2 cysteine pairs are disulfide-bonded: Cys43/Cys121 and Cys168/Cys249. Residue Asn44 is glycosylated (N-linked (GlcNAc...) asparagine). Positions 253 to 255 (EWI) match the EWI motif motif. Intrachain disulfides connect Cys304-Cys377, Cys434-Cys511, Cys562-Cys640, Cys697-Cys778, and Cys834-Cys909. N-linked (GlcNAc...) asparagine glycosylation is present at Asn322. A helical transmembrane segment spans residues 955–975 (LLYFLFICPFVLLLLLLISLL). Residues 976–1021 (CLYWKARKLSTLRSNTRKEKALWVDLKEAGGVTTNRREDEEEDEGN) lie on the Cytoplasmic side of the membrane.

Post-translationally, N-glycosylated. In terms of tissue distribution, expressed in lung, thymus and small intestine. Detected in cutaneous dendritic cells, activated T-cells, monocytes and granulocytes as well as with epithelial cells with dendritic morphology. Expressed in some leukemic cells, the CD4(+) CD56(+) blastic tumor cells, as well as in Langerhans cells from LCH (Langerhans cell histiocytosis) patients.

It is found in the membrane. In terms of biological role, plays a role as inhibitor of T-cells proliferation induced by CD3. Inhibits expression of IL2RA on activated T-cells and secretion of IL2. Inhibits tyrosine kinases that are required for IL2 production and cellular proliferation. Inhibits phospholipase C-gamma-1/PLCG1 phosphorylation and subsequent CD3-induced changes in intracellular free calcium. Prevents nuclear translocation of nuclear factor of activated T-cell to the nucleus. Plays a role in the inhibition of T-cell proliferation via IL10 secretion by cutaneous dendritic cells. May be a marker of CD4(+) CD56(+) leukemic tumor cells. This Homo sapiens (Human) protein is Immunoglobulin superfamily member 2 (CD101).